A 189-amino-acid chain; its full sequence is Ion-translocating oxidoreductase complex subunit B (189 aa).

The interval 1–26 (MSQVIIAIILLGLLALAFGALLGYAA) is hydrophobic. The 4Fe-4S domain maps to 32–90 (EGDPIIDQAEALLPQTQCGQCGYPGCRPYAEAIANGEKINKCPPGGTATMEKLAELMGV). [4Fe-4S] cluster is bound by residues Cys49, Cys52, Cys57, Cys73, Cys114, Cys117, Cys120, Cys124, Cys144, Cys147, Cys150, and Cys154. 4Fe-4S ferredoxin-type domains follow at residues 105–134 (KVAFIREAECIGCTKCIQACPVDAILGTGK) and 135–164 (QMHTVITDYCTGCDLCVEPCPVDCIDMIPV).

It belongs to the 4Fe4S bacterial-type ferredoxin family. RnfB subfamily. In terms of assembly, the complex is composed of six subunits: RnfA, RnfB, RnfC, RnfD, RnfE and RnfG. [4Fe-4S] cluster serves as cofactor.

The protein resides in the cell inner membrane. In terms of biological role, part of a membrane-bound complex that couples electron transfer with translocation of ions across the membrane. In Shewanella loihica (strain ATCC BAA-1088 / PV-4), this protein is Ion-translocating oxidoreductase complex subunit B.